A 220-amino-acid chain; its full sequence is Ribosome maturation factor RimP (220 aa).

Over residues 1-15 the composition is skewed to low complexity; it reads MSQRGRATRPTGPTG. Disordered regions lie at residues 1-35 and 184-220; these read MSQR…GGDL and PGRV…GEER. The span at 198–220 shows a compositional bias: acidic residues; sequence DGADGADEAGDFDDDDDVEGEER.

It belongs to the RimP family.

It is found in the cytoplasm. In terms of biological role, required for maturation of 30S ribosomal subunits. This chain is Ribosome maturation factor RimP, found in Salinispora tropica (strain ATCC BAA-916 / DSM 44818 / JCM 13857 / NBRC 105044 / CNB-440).